A 116-amino-acid polypeptide reads, in one-letter code: Immunoglobulin heavy variable 3-66 (116 aa).

The first 19 residues, 1–19, serve as a signal peptide directing secretion; the sequence is MEFGLSWVFLVAILKGVQC. The segment at 20–44 is framework-1; the sequence is EVQLVESGGGLIQPGGSLRLSCAAS. An Ig-like domain is found at 20 to 116; that stretch reads EVQLVESGGG…EDTAVYYCAR (97 aa). Cys-41 and Cys-114 form a disulfide bridge. The segment at 45 to 52 is complementarity-determining-1; that stretch reads GFTVSSNY. The interval 53–69 is framework-2; that stretch reads MSWVRQAPGKGLEWVSV. The tract at residues 70-76 is complementarity-determining-2; that stretch reads IYSCGST. Residues 77-114 form a framework-3 region; it reads YYADSVKGRFTISRDNSKNTLYLQMNSLRAEDTAVYYC. The tract at residues 115–116 is complementarity-determining-3; it reads AR.

Immunoglobulins are composed of two identical heavy chains and two identical light chains; disulfide-linked.

The protein localises to the secreted. It localises to the cell membrane. Functionally, v region of the variable domain of immunoglobulin heavy chains that participates in the antigen recognition. Immunoglobulins, also known as antibodies, are membrane-bound or secreted glycoproteins produced by B lymphocytes. In the recognition phase of humoral immunity, the membrane-bound immunoglobulins serve as receptors which, upon binding of a specific antigen, trigger the clonal expansion and differentiation of B lymphocytes into immunoglobulins-secreting plasma cells. Secreted immunoglobulins mediate the effector phase of humoral immunity, which results in the elimination of bound antigens. The antigen binding site is formed by the variable domain of one heavy chain, together with that of its associated light chain. Thus, each immunoglobulin has two antigen binding sites with remarkable affinity for a particular antigen. The variable domains are assembled by a process called V-(D)-J rearrangement and can then be subjected to somatic hypermutations which, after exposure to antigen and selection, allow affinity maturation for a particular antigen. In Homo sapiens (Human), this protein is Immunoglobulin heavy variable 3-66.